Reading from the N-terminus, the 830-residue chain is P-selectin (830 aa).

Positions 1 to 41 (MANCQIAILYQRFQRVVFGISQLLCFSALISELTNQKEVAA) are cleaved as a signal peptide. Topologically, residues 42 to 771 (WTYHYSTKAY…QAGPLTIQEA (730 aa)) are extracellular. N-linked (GlcNAc...) asparagine glycosylation is found at asparagine 54 and asparagine 98. The C-type lectin domain occupies 58-158 (KYCQNRYTDL…HCLKKKHALC (101 aa)). 23 disulfides stabilise this stretch: cysteine 60–cysteine 158, cysteine 131–cysteine 150, cysteine 163–cysteine 174, cysteine 168–cysteine 183, cysteine 185–cysteine 194, cysteine 200–cysteine 244, cysteine 230–cysteine 257, cysteine 262–cysteine 306, cysteine 292–cysteine 319, cysteine 324–cysteine 368, cysteine 354–cysteine 381, cysteine 386–cysteine 430, cysteine 416–cysteine 443, cysteine 448–cysteine 492, cysteine 478–cysteine 505, cysteine 510–cysteine 554, cysteine 540–cysteine 567, cysteine 572–cysteine 616, cysteine 602–cysteine 629, cysteine 642–cysteine 686, cysteine 672–cysteine 699, cysteine 704–cysteine 748, and cysteine 734–cysteine 761. Ca(2+) contacts are provided by glutamate 121, asparagine 123, and asparagine 124. Asparagine 123 contributes to the a carbohydrate binding site. Residues glutamate 133 and asparagine 146 each contribute to the a carbohydrate site. Residues asparagine 146 and aspartate 147 each coordinate Ca(2+). Residues 159–195 (YTASCQDMSCSKQGECLETIGNYTCSCYPGFYGPECE) enclose the EGF-like domain. Asparagine 180 is a glycosylation site (N-linked (GlcNAc...) asparagine). 9 Sushi domains span residues 198–259 (RECG…QCLA), 260–321 (AQCP…VCKA), 322–383 (VQCQ…TCEA), 384–445 (ISCE…VCQA), 446–507 (LQCQ…ECQA), 508–569 (IPCT…MCEA), 570–631 (IKCP…TCKG), 640–701 (VQCP…ACRA), and 702–763 (VKCS…TCQA). Residues asparagine 212 and asparagine 219 are each glycosylated (N-linked (GlcNAc...) asparagine). N-linked (GlcNAc...) asparagine glycosylation occurs at asparagine 411. The N-linked (GlcNAc...) asparagine glycan is linked to asparagine 460. Residue asparagine 518 is glycosylated (N-linked (GlcNAc...) asparagine). Asparagine 665 is a glycosylation site (N-linked (GlcNAc...) asparagine). N-linked (GlcNAc...) asparagine glycosylation is found at asparagine 716, asparagine 723, and asparagine 741. A helical membrane pass occupies residues 772–795 (LTYFGGAVASTIGLIMGGTLLALL). Residues 796–830 (RKRFRQKDDGKCPLNPHSHLGTYGVFTNAAFDPSP) are Cytoplasmic-facing. Cysteine 807 carries the S-palmitoyl cysteine; alternate lipid modification. Residue cysteine 807 is the site of S-stearoyl cysteine; alternate attachment. The Endocytosis signal motif lies at 818-821 (YGVF). Residues 821-830 (FTNAAFDPSP) are interaction with SNX17.

The protein belongs to the selectin/LECAM family. As to quaternary structure, interacts with SNX17. Interacts with SELPLG/PSGL1 and PODXL2 and mediates neutrophil adhesion and leukocyte rolling. This interaction requires the sialyl-Lewis X epitope of SELPLG and PODXL2, and specific tyrosine sulfation on SELPLG. Interacts (via C-type lectin domain) with alpha-IIb/beta3 integrin ITGA2B:ITGB3 and alpha-V/beta-3 integrin ITGAV:ITGB3. Interacts with alpha5/beta1 integrin ITGA5:ITGB1 and alpha4/beta1 integrin ITGA4:ITGB. In terms of tissue distribution, stored in the alpha-granules of platelets and Weibel-Palade bodies of endothelial cells. Upon cell activation by agonists, P-selectin is transported rapidly to the cell surface.

It localises to the cell membrane. Ca(2+)-dependent receptor for myeloid cells that binds to carbohydrates on neutrophils and monocytes. Mediates the interaction of activated endothelial cells or platelets with leukocytes. The ligand recognized is sialyl-Lewis X. Mediates rapid rolling of leukocyte rolling over vascular surfaces during the initial steps in inflammation through interaction with SELPLG. Mediates cell-cell interactions and cell adhesion via the interaction with integrin alpha-IIb/beta3 (ITGA2B:ITGB3) and integrin alpha-V/beta-3 (ITGAV:ITGB3). In Homo sapiens (Human), this protein is P-selectin (SELP).